Consider the following 380-residue polypeptide: Cytochrome b (380 aa).

The next 4 helical transmembrane spans lie at 33–53 (FGSLLGLCLITQILTGLFLAM), 77–98 (WLIRNLHANGASFFFICMYLHV), 113–133 (WNIGVILLLLVMMTAFVGYVL), and 178–198 (FFAFHFILPFIVAAAVILHLL). 2 residues coordinate heme b: histidine 83 and histidine 97. Residues histidine 182 and histidine 196 each coordinate heme b. Histidine 201 contacts a ubiquinone. Transmembrane regions (helical) follow at residues 226–246 (YKDILGFIVMLLALITLALFS), 288–308 (LGGVLALLFSILVLMIVPILH), 320–340 (FSQFLFWVLVADMLILTWIGG), and 347–367 (FIIIGQIASILYFTLFLLLIP).

The protein belongs to the cytochrome b family. As to quaternary structure, the cytochrome bc1 complex contains 3 respiratory subunits (MT-CYB, CYC1 and UQCRFS1), 2 core proteins (UQCRC1 and UQCRC2) and probably 6 low-molecular weight proteins. It depends on heme b as a cofactor.

The protein resides in the mitochondrion inner membrane. Its function is as follows. Component of the ubiquinol-cytochrome c reductase complex (complex III or cytochrome b-c1 complex) that is part of the mitochondrial respiratory chain. The b-c1 complex mediates electron transfer from ubiquinol to cytochrome c. Contributes to the generation of a proton gradient across the mitochondrial membrane that is then used for ATP synthesis. This Arapaima gigas (Arapaima) protein is Cytochrome b (mt-cyb).